The primary structure comprises 389 residues: Phenylpropanoylacetyl-CoA synthase (389 aa).

Cys-163 is an active-site residue.

The protein belongs to the thiolase-like superfamily. Chalcone/stilbene synthases family. As to quaternary structure, homodimer. As to expression, expressed in both the leaf and rhizome, with higher expression in the rhizome.

The catalysed reaction is (E)-feruloyl-CoA + malonyl-CoA + H(+) = (E)-feruloylacetyl-CoA + CO2 + CoA. The enzyme catalyses 4-coumaroyl-CoA + malonyl-CoA + H(+) = (4-coumaroyl)acetyl-CoA + CO2 + CoA. The protein operates within secondary metabolite biosynthesis; flavonoid biosynthesis. Functionally, catalyzes the formation of feruloyldiketide-CoA by condensing feruloyl-CoA and malonyl-CoA in the curcuminoid biosynthesis. Has no activity with cinnamoyl-CoA. This Curcuma longa (Turmeric) protein is Phenylpropanoylacetyl-CoA synthase (DCS).